We begin with the raw amino-acid sequence, 61 residues long: Large ribosomal subunit protein uL30 (61 aa).

Belongs to the universal ribosomal protein uL30 family. As to quaternary structure, part of the 50S ribosomal subunit.

The protein is Large ribosomal subunit protein uL30 of Clostridioides difficile (strain 630) (Peptoclostridium difficile).